Consider the following 351-residue polypeptide: uncharacterized protein (351 aa).

Positions 215, 226, 290, 319, and 333 each coordinate Mn(2+).

The protein belongs to the peptidase M24B family. Requires Mn(2+) as cofactor.

This is an uncharacterized protein from Staphylococcus epidermidis (strain ATCC 35984 / DSM 28319 / BCRC 17069 / CCUG 31568 / BM 3577 / RP62A).